Consider the following 488-residue polypeptide: Beta-xylosidase (488 aa).

E163 serves as the catalytic Proton donor. Residue E275 is the Nucleophile of the active site.

This sequence belongs to the glycosyl hydrolase 39 family.

It carries out the reaction Hydrolysis of (1-&gt;4)-beta-D-xylans, to remove successive D-xylose residues from the non-reducing termini.. Beta-xylosidase is an intracellular xylan-degrading enzyme. This Caldicellulosiruptor saccharolyticus (Caldocellum saccharolyticum) protein is Beta-xylosidase (xynB).